Consider the following 92-residue polypeptide: Small ribosomal subunit protein bS20 (92 aa).

The tract at residues 1 to 28 is disordered; the sequence is MANTASAEKRNRQAQKRRARNVQVRTGV.

It belongs to the bacterial ribosomal protein bS20 family.

Binds directly to 16S ribosomal RNA. In Anaeromyxobacter dehalogenans (strain 2CP-C), this protein is Small ribosomal subunit protein bS20.